The chain runs to 346 residues: Putative glycosyltransferase HI_0523 (346 aa).

This sequence belongs to the glycosyltransferase 9 family.

This Haemophilus influenzae (strain ATCC 51907 / DSM 11121 / KW20 / Rd) protein is Putative glycosyltransferase HI_0523.